The primary structure comprises 101 residues: Protein translation factor SUI1 homolog (101 aa).

Belongs to the SUI1 family.

The chain is Protein translation factor SUI1 homolog from Methanoregula boonei (strain DSM 21154 / JCM 14090 / 6A8).